A 932-amino-acid chain; its full sequence is Glycine dehydrogenase (decarboxylating) (932 aa).

Residue Lys-685 is modified to N6-(pyridoxal phosphate)lysine.

This sequence belongs to the GcvP family. As to quaternary structure, the glycine cleavage system is composed of four proteins: P, T, L and H. Pyridoxal 5'-phosphate is required as a cofactor.

The enzyme catalyses N(6)-[(R)-lipoyl]-L-lysyl-[glycine-cleavage complex H protein] + glycine + H(+) = N(6)-[(R)-S(8)-aminomethyldihydrolipoyl]-L-lysyl-[glycine-cleavage complex H protein] + CO2. Functionally, the glycine cleavage system catalyzes the degradation of glycine. The P protein binds the alpha-amino group of glycine through its pyridoxal phosphate cofactor; CO(2) is released and the remaining methylamine moiety is then transferred to the lipoamide cofactor of the H protein. This is Glycine dehydrogenase (decarboxylating) from Brucella suis biovar 1 (strain 1330).